Consider the following 288-residue polypeptide: Phytanoyl-CoA dioxygenase domain-containing protein 1 homolog (288 aa).

2-oxoglutarate contacts are provided by residues Lys95, Met134, 149 to 151 (HVD), and Trp167. His149 and Asp151 together coordinate Fe cation. Residue His242 coordinates Fe cation. Ser244 and Arg253 together coordinate 2-oxoglutarate.

This sequence belongs to the PhyH family. PHYHD1 subfamily. Requires Fe cation as cofactor.

Its function is as follows. Has alpha-ketoglutarate-dependent dioxygenase activity. Does not show detectable activity towards fatty acid CoA thioesters. Is not expected to be active with phytanoyl CoA. The chain is Phytanoyl-CoA dioxygenase domain-containing protein 1 homolog from Caenorhabditis briggsae.